The chain runs to 216 residues: Ribosomal RNA large subunit methyltransferase E (216 aa).

5 residues coordinate S-adenosyl-L-methionine: glycine 71, tryptophan 73, aspartate 88, aspartate 104, and aspartate 126. Lysine 166 (proton acceptor) is an active-site residue.

It belongs to the class I-like SAM-binding methyltransferase superfamily. RNA methyltransferase RlmE family.

It localises to the cytoplasm. The catalysed reaction is uridine(2552) in 23S rRNA + S-adenosyl-L-methionine = 2'-O-methyluridine(2552) in 23S rRNA + S-adenosyl-L-homocysteine + H(+). Its function is as follows. Specifically methylates the uridine in position 2552 of 23S rRNA at the 2'-O position of the ribose in the fully assembled 50S ribosomal subunit. The chain is Ribosomal RNA large subunit methyltransferase E from Wolbachia sp. subsp. Brugia malayi (strain TRS).